The sequence spans 208 residues: Vacuolar iron transporter homolog 5 (208 aa).

Topologically, residues 1 to 41 (MAAMMNNERSSSNKLQVDAENPAAVGDELDLAARANWLRAA) are cytoplasmic. The chain crosses the membrane as a helical span at residues 42–62 (VLGANDGLVSTASLMLGVGAV). Topologically, residues 63–69 (KAEARAM) are vacuolar. Residues 70 to 90 (VISGFAGLLAGACSMAIGEFV) form a helical membrane-spanning segment. The Cytoplasmic portion of the chain corresponds to 91 to 125 (SVCSQRDVELAQLERDGKRGGEEEKALPSPAQAAA). Residues 126–146 (ASAMAFSVGAVVPLLAAGFIV) form a helical membrane-spanning segment. At 147-151 (NYRLR) the chain is on the vacuolar side. A helical transmembrane segment spans residues 152-172 (IAVVVAVASVALAAFGCVGAV). Residues 173 to 184 (LGRAAVARSSAR) lie on the Cytoplasmic side of the membrane. A helical membrane pass occupies residues 185-205 (VVLGGWAAMGITFGLMRLFKA). Residues 206–208 (SGI) lie on the Vacuolar side of the membrane.

It belongs to the CCC1 family.

It is found in the vacuole membrane. It catalyses the reaction Fe(2+)(in) = Fe(2+)(out). Probable vacuolar iron transporter that may be involved in the regulation of iron distribution throughout the plant. In Oryza sativa subsp. japonica (Rice), this protein is Vacuolar iron transporter homolog 5.